Here is a 505-residue protein sequence, read N- to C-terminus: Acetyl-coenzyme A carboxylase carboxyl transferase subunit beta, chloroplastic (505 aa).

Positions glutamate 189–glycine 205 are enriched in low complexity. The disordered stretch occupies residues glutamate 189–arginine 213. The 272-residue stretch at leucine 228–serine 499 folds into the CoA carboxyltransferase N-terminal domain. Cysteine 232, cysteine 235, cysteine 251, and cysteine 254 together coordinate Zn(2+). The segment at cysteine 232–cysteine 254 adopts a C4-type zinc-finger fold.

It belongs to the AccD/PCCB family. Acetyl-CoA carboxylase is a heterohexamer composed of biotin carboxyl carrier protein, biotin carboxylase and 2 subunits each of ACCase subunit alpha and ACCase plastid-coded subunit beta (accD). Requires Zn(2+) as cofactor.

It is found in the plastid. It localises to the chloroplast stroma. The enzyme catalyses N(6)-carboxybiotinyl-L-lysyl-[protein] + acetyl-CoA = N(6)-biotinyl-L-lysyl-[protein] + malonyl-CoA. It participates in lipid metabolism; malonyl-CoA biosynthesis; malonyl-CoA from acetyl-CoA: step 1/1. Component of the acetyl coenzyme A carboxylase (ACC) complex. Biotin carboxylase (BC) catalyzes the carboxylation of biotin on its carrier protein (BCCP) and then the CO(2) group is transferred by the transcarboxylase to acetyl-CoA to form malonyl-CoA. The polypeptide is Acetyl-coenzyme A carboxylase carboxyl transferase subunit beta, chloroplastic (Calycanthus floridus var. glaucus (Eastern sweetshrub)).